The chain runs to 168 residues: Small ribosomal subunit protein uS9 (168 aa).

The segment at 1 to 38 (MAKIADSIDSAQADSVENVESYSTETPESAAPAAPRPV) is disordered. The segment covering 9–22 (DSAQADSVENVESY) has biased composition (polar residues). The segment covering 23-37 (STETPESAAPAAPRP) has biased composition (low complexity).

It belongs to the universal ribosomal protein uS9 family.

The sequence is that of Small ribosomal subunit protein uS9 from Leifsonia xyli subsp. xyli (strain CTCB07).